The primary structure comprises 339 residues: Cathepsin B (339 aa).

The signal sequence occupies residues 1–17 (MWQLWASLCCLLALADA). A propeptide spans 18 to 79 (RSRPSFHPLS…QRVMFTEDLK (62 aa)) (activation peptide). 6 disulfides stabilise this stretch: Cys93/Cys122, Cys105/Cys150, Cys141/Cys207, Cys142/Cys146, Cys179/Cys211, and Cys187/Cys198. Cys108 is a catalytic residue. The N-linked (GlcNAc...) asparagine glycan is linked to Asn192. The residue at position 220 (Lys220) is an N6-acetyllysine. Catalysis depends on residues His278 and Asn298. Residues 334–339 (QYWEKI) constitute a propeptide that is removed on maturation.

It belongs to the peptidase C1 family. As to quaternary structure, dimer of a heavy chain and a light chain cross-linked by a disulfide bond. Interacts with SRPX2. Directly interacts with SHKBP1.

It is found in the lysosome. It localises to the melanosome. Its subcellular location is the secreted. The protein resides in the extracellular space. The protein localises to the apical cell membrane. It catalyses the reaction Hydrolysis of proteins with broad specificity for peptide bonds. Preferentially cleaves -Arg-Arg-|-Xaa bonds in small molecule substrates (thus differing from cathepsin L). In addition to being an endopeptidase, shows peptidyl-dipeptidase activity, liberating C-terminal dipeptides.. Functionally, thiol protease which is believed to participate in intracellular degradation and turnover of proteins. Cleaves matrix extracellular phosphoglycoprotein MEPE. Involved in the solubilization of cross-linked TG/thyroglobulin in the thyroid follicle lumen. Has also been implicated in tumor invasion and metastasis. The chain is Cathepsin B (CTSB) from Pongo abelii (Sumatran orangutan).